Consider the following 293-residue polypeptide: Elongation factor Ts (293 aa).

The segment at 80–83 (TDFV) is involved in Mg(2+) ion dislocation from EF-Tu.

Belongs to the EF-Ts family.

The protein localises to the cytoplasm. Associates with the EF-Tu.GDP complex and induces the exchange of GDP to GTP. It remains bound to the aminoacyl-tRNA.EF-Tu.GTP complex up to the GTP hydrolysis stage on the ribosome. This is Elongation factor Ts from Burkholderia ambifaria (strain MC40-6).